We begin with the raw amino-acid sequence, 257 residues long: Ribonuclease PH (257 aa).

Phosphate contacts are provided by residues Arg-86 and 124-126; that span reads GTR.

This sequence belongs to the RNase PH family. Homohexameric ring arranged as a trimer of dimers.

It catalyses the reaction tRNA(n+1) + phosphate = tRNA(n) + a ribonucleoside 5'-diphosphate. Phosphorolytic 3'-5' exoribonuclease that plays an important role in tRNA 3'-end maturation. Removes nucleotide residues following the 3'-CCA terminus of tRNAs; can also add nucleotides to the ends of RNA molecules by using nucleoside diphosphates as substrates, but this may not be physiologically important. Probably plays a role in initiation of 16S rRNA degradation (leading to ribosome degradation) during starvation. This chain is Ribonuclease PH, found in Sulfurihydrogenibium sp. (strain YO3AOP1).